The chain runs to 236 residues: Syntaxin-8 (236 aa).

The Cytoplasmic segment spans residues 1-215 (MAPDPWFSTY…LVDRKSTSCG (215 aa)). Positions 42–65 (VTIRALLQKLKEKIALLKDLLLRA) form a coiled coil. Residues 145-207 (QKIIQEQDAG…RTETRRVNLV (63 aa)) enclose the t-SNARE coiled-coil homology domain. S160 carries the post-translational modification Phosphoserine. The helical; Anchor for type IV membrane protein transmembrane segment at 216-232 (MIMVILLLLVAIVVVAV) threads the bilayer. Residues 233–236 (WPTK) lie on the Vesicular side of the membrane.

Belongs to the syntaxin family. As to quaternary structure, forms a SNARE complex with STX7, VTI1B and VAMP8 which functions in the homotypic fusion of late endosomes. Part of the SNARE core complex containing STX7, VAMP8 and VTI1B. Interacts with VAMP8. Interacts with HECTD3. Interacts with TPC1. In terms of processing, ubiquitinated by HECTD3.

It localises to the membrane. In terms of biological role, vesicle trafficking protein that functions in the early secretory pathway, possibly by mediating retrograde transport from cis-Golgi membranes to the ER. In Bos taurus (Bovine), this protein is Syntaxin-8 (STX8).